Reading from the N-terminus, the 306-residue chain is D-alanine--D-alanine ligase (306 aa).

The region spanning 101 to 300 is the ATP-grasp domain; the sequence is RIMLAAAGVP…FGELVTWMVE (200 aa). ATP is bound at residue 128-182; it reads MPTPYVLKPNAGGSSVGVFIVREDQAHPPQELTREDWPHGENLLAEEFIPGLELT. 3 residues coordinate Mg(2+): Asp250, Glu267, and Asn269.

This sequence belongs to the D-alanine--D-alanine ligase family. It depends on Mg(2+) as a cofactor. The cofactor is Mn(2+).

The protein resides in the cytoplasm. The enzyme catalyses 2 D-alanine + ATP = D-alanyl-D-alanine + ADP + phosphate + H(+). It functions in the pathway cell wall biogenesis; peptidoglycan biosynthesis. Its function is as follows. Cell wall formation. The protein is D-alanine--D-alanine ligase of Xanthobacter autotrophicus (strain ATCC BAA-1158 / Py2).